Reading from the N-terminus, the 304-residue chain is Recombination-associated protein RdgC (304 aa).

Belongs to the RdgC family.

It localises to the cytoplasm. The protein localises to the nucleoid. May be involved in recombination. The polypeptide is Recombination-associated protein RdgC (Shewanella baltica (strain OS195)).